A 275-amino-acid polypeptide reads, in one-letter code: MTLQQEIIQALGAKPHINPEEEIRRSVDFLKAYLKTYPFLKSLVLGISGGQDSTLAGKLSQMAIAELREETGDNALQFIAVRLPYGVQADEQDCQDAIAFIQPDRVLTVNIKGAVLASEQALREAGIELSDFVRGNEKARERMKAQYSIAGMTHGVVVGTDHAAEAITGFFTKYGDGGTDINPLHRLNKRQGKQLLAALGCPEHLYKKVPTADLEDDRPSLPDEAALGVTYDNIDDYLEGKTLDSAIAKTIEGWYVKTEHKRRLPITVFDDFWKR.

46–53 (GISGGQDS) is an ATP binding site. Aspartate 52 is a Mg(2+) binding site. Position 140 (arginine 140) interacts with deamido-NAD(+). Threonine 160 is an ATP binding site. Glutamate 165 is a Mg(2+) binding site. Positions 173 and 180 each coordinate deamido-NAD(+). ATP-binding residues include lysine 189 and threonine 211. Residue 260–261 (HK) coordinates deamido-NAD(+).

Belongs to the NAD synthetase family. As to quaternary structure, homodimer.

The catalysed reaction is deamido-NAD(+) + NH4(+) + ATP = AMP + diphosphate + NAD(+) + H(+). Its pathway is cofactor biosynthesis; NAD(+) biosynthesis; NAD(+) from deamido-NAD(+) (ammonia route): step 1/1. In terms of biological role, catalyzes the ATP-dependent amidation of deamido-NAD to form NAD. Uses ammonia as a nitrogen source. The protein is NH(3)-dependent NAD(+) synthetase of Salmonella paratyphi A (strain ATCC 9150 / SARB42).